The primary structure comprises 944 residues: Isoleucine--tRNA ligase (944 aa).

The 'HIGH' region motif lies at 58–68; that stretch reads PYANGDIHIGH. Residue Glu568 participates in L-isoleucyl-5'-AMP binding. Residues 609-613 carry the 'KMSKS' region motif; the sequence is KMSKS. Residue Lys612 coordinates ATP. Zn(2+) contacts are provided by Cys907, Cys910, Cys927, and Cys930.

This sequence belongs to the class-I aminoacyl-tRNA synthetase family. IleS type 1 subfamily. As to quaternary structure, monomer. The cofactor is Zn(2+).

The protein resides in the cytoplasm. The catalysed reaction is tRNA(Ile) + L-isoleucine + ATP = L-isoleucyl-tRNA(Ile) + AMP + diphosphate. Its function is as follows. Catalyzes the attachment of isoleucine to tRNA(Ile). As IleRS can inadvertently accommodate and process structurally similar amino acids such as valine, to avoid such errors it has two additional distinct tRNA(Ile)-dependent editing activities. One activity is designated as 'pretransfer' editing and involves the hydrolysis of activated Val-AMP. The other activity is designated 'posttransfer' editing and involves deacylation of mischarged Val-tRNA(Ile). This is Isoleucine--tRNA ligase from Psychromonas ingrahamii (strain DSM 17664 / CCUG 51855 / 37).